The chain runs to 326 residues: tRNA dimethylallyltransferase 2 (326 aa).

14-21 contributes to the ATP binding site; that stretch reads GPTASGKT. 16-21 is a binding site for substrate; sequence TASGKT. Residues 39-42 form an interaction with substrate tRNA region; it reads DSMQ.

The protein belongs to the IPP transferase family. As to quaternary structure, monomer. Requires Mg(2+) as cofactor.

The catalysed reaction is adenosine(37) in tRNA + dimethylallyl diphosphate = N(6)-dimethylallyladenosine(37) in tRNA + diphosphate. Its function is as follows. Catalyzes the transfer of a dimethylallyl group onto the adenine at position 37 in tRNAs that read codons beginning with uridine, leading to the formation of N6-(dimethylallyl)adenosine (i(6)A). This is tRNA dimethylallyltransferase 2 from Geotalea daltonii (strain DSM 22248 / JCM 15807 / FRC-32) (Geobacter daltonii).